We begin with the raw amino-acid sequence, 129 residues long: Lysozyme C-2 (129 aa).

The C-type lysozyme domain occupies 1–129 (KVFERCELAR…VSSYVEGCTL (129 aa)). 4 disulfide bridges follow: Cys-6–Cys-127, Cys-30–Cys-115, Cys-65–Cys-81, and Cys-77–Cys-95. Residues Glu-35 and Asp-53 contribute to the active site.

Belongs to the glycosyl hydrolase 22 family. As to quaternary structure, monomer.

The catalysed reaction is Hydrolysis of (1-&gt;4)-beta-linkages between N-acetylmuramic acid and N-acetyl-D-glucosamine residues in a peptidoglycan and between N-acetyl-D-glucosamine residues in chitodextrins.. In terms of biological role, lysozymes have primarily a bacteriolytic function; those in tissues and body fluids are associated with the monocyte-macrophage system and enhance the activity of immunoagents. This chain is Lysozyme C-2, found in Capra hircus (Goat).